We begin with the raw amino-acid sequence, 316 residues long: Dehydrogenase/reductase SDR family protein 7-like (316 aa).

Residues 1 to 18 (MFFYKIIYFIGFPYIVLR) are Cytoplasmic-facing. The chain crosses the membrane as a helical; Signal-anchor for type II membrane protein span at residues 19–39 (LIVSIILPIASLYFIYCNFIA). The Peroxisomal segment spans residues 40 to 316 (PKLREKPESS…HKFASSSVKK (277 aa)). 56–80 (IITGASSGIGAELAKKYARLGCKVT) contacts NAD(+). Ser-194 serves as a coordination point for substrate. Tyr-207 functions as the Proton acceptor in the catalytic mechanism.

This sequence belongs to the short-chain dehydrogenases/reductases (SDR) family.

The protein resides in the peroxisome membrane. In terms of biological role, putative oxidoreductase. The polypeptide is Dehydrogenase/reductase SDR family protein 7-like (Dictyostelium discoideum (Social amoeba)).